Consider the following 202-residue polypeptide: LexA repressor (202 aa).

A DNA-binding region (H-T-H motif) is located at residues 28–48 (RAEIAQRLGFRSPNAAEEHLK). Catalysis depends on for autocatalytic cleavage activity residues serine 119 and lysine 156.

This sequence belongs to the peptidase S24 family. In terms of assembly, homodimer.

It carries out the reaction Hydrolysis of Ala-|-Gly bond in repressor LexA.. Represses a number of genes involved in the response to DNA damage (SOS response), including recA and lexA. Binds to the 16 bp palindromic sequence 5'-CTGTATATATATACAG-3'. In the presence of single-stranded DNA, RecA interacts with LexA causing an autocatalytic cleavage which disrupts the DNA-binding part of LexA, leading to derepression of the SOS regulon and eventually DNA repair. The chain is LexA repressor from Edwardsiella ictaluri (strain 93-146).